Reading from the N-terminus, the 287-residue chain is PPP2R1A-PPP2R2A-interacting phosphatase regulator 1 (287 aa).

The segment at methionine 1 to leucine 44 is disordered. Positions glycine 15–leucine 32 are enriched in gly residues. Serine 35 carries the post-translational modification Phosphoserine. At serine 37 the chain carries Phosphoserine; by CHEK1. The residue at position 45 (serine 45) is a Phosphoserine. Threonine 47 is modified (phosphothreonine). Residues serine 48, serine 62, and serine 76 each carry the phosphoserine modification. Lysine 89 is covalently cross-linked (Glycyl lysine isopeptide (Lys-Gly) (interchain with G-Cter in SUMO1)). Residues serine 143 and serine 147 each carry the phosphoserine modification. The residue at position 149 (threonine 149) is a Phosphothreonine. 2 disordered regions span residues serine 167–serine 189 and glycine 236–lysine 287. Composition is skewed to low complexity over residues proline 178–serine 189 and glycine 246–serine 257. Residues serine 187 and serine 189 each carry the phosphoserine modification. Positions alanine 259 to serine 270 are enriched in polar residues. Serine 267, serine 270, and serine 276 each carry phosphoserine.

It belongs to the FAM122 family. As to quaternary structure, interacts with PPP2CA and PPP2R1A. Interacts (via its N-terminus) with PPP2R2A; the interaction is direct and this interaction inhibits PP2A activity. The CHEK1-mediated Ser-37 phosphorylated form interacts with 14-3-3 proteins. Post-translationally, CHEK1-mediated phosphorylation at Ser-37 negatively regulates its ability to inhibit serine/threonine-protein phosphatase 2A (PP2A) activity. Phosphorylation leads to its release from the PP2A complex and its sequestration by 14-3-3 proteins in the cytoplasm resulting in its inability to translocate to the nucleus, where it otherwise inhibits PP2A.

The protein localises to the nucleus. It is found in the cytoplasm. Acts as an inhibitor of serine/threonine-protein phosphatase 2A (PP2A) activity. Inhibits PP2A activity by blocking the substrate binding site on PPP2R2A and the active site of PPP2CA. Potentiates ubiquitin-mediated proteasomal degradation of serine/threonine-protein phosphatase 2A catalytic subunit alpha (PPP2CA). Inhibits PP2A-mediated dephosphorylation of WEE1, promoting ubiquitin-mediated proteolysis of WEE1, thereby releasing G2/M checkpoint. In Homo sapiens (Human), this protein is PPP2R1A-PPP2R2A-interacting phosphatase regulator 1.